The primary structure comprises 258 residues: Regulatory protein RecX (258 aa).

Belongs to the RecX family.

It is found in the cytoplasm. Its function is as follows. Modulates RecA activity. The sequence is that of Regulatory protein RecX from Streptococcus pneumoniae (strain JJA).